The following is a 616-amino-acid chain: Dihydroxy-acid dehydratase (616 aa).

Mg(2+) is bound at residue aspartate 81. Cysteine 122 lines the [2Fe-2S] cluster pocket. Mg(2+) contacts are provided by aspartate 123 and lysine 124. Lysine 124 carries the post-translational modification N6-carboxylysine. Cysteine 195 provides a ligand contact to [2Fe-2S] cluster. Glutamate 491 lines the Mg(2+) pocket. Catalysis depends on serine 517, which acts as the Proton acceptor.

This sequence belongs to the IlvD/Edd family. As to quaternary structure, homodimer. It depends on [2Fe-2S] cluster as a cofactor. The cofactor is Mg(2+).

The catalysed reaction is (2R)-2,3-dihydroxy-3-methylbutanoate = 3-methyl-2-oxobutanoate + H2O. It catalyses the reaction (2R,3R)-2,3-dihydroxy-3-methylpentanoate = (S)-3-methyl-2-oxopentanoate + H2O. Its pathway is amino-acid biosynthesis; L-isoleucine biosynthesis; L-isoleucine from 2-oxobutanoate: step 3/4. It participates in amino-acid biosynthesis; L-valine biosynthesis; L-valine from pyruvate: step 3/4. In terms of biological role, functions in the biosynthesis of branched-chain amino acids. Catalyzes the dehydration of (2R,3R)-2,3-dihydroxy-3-methylpentanoate (2,3-dihydroxy-3-methylvalerate) into 2-oxo-3-methylpentanoate (2-oxo-3-methylvalerate) and of (2R)-2,3-dihydroxy-3-methylbutanoate (2,3-dihydroxyisovalerate) into 2-oxo-3-methylbutanoate (2-oxoisovalerate), the penultimate precursor to L-isoleucine and L-valine, respectively. The protein is Dihydroxy-acid dehydratase of Shewanella woodyi (strain ATCC 51908 / MS32).